A 506-amino-acid chain; its full sequence is UBX domain-containing protein 4 (506 aa).

The interval 1–199 is interaction with UBQLN1; it reads MLWFQGAIPA…PAEDLTVRVE (199 aa). Over 1–411 the chain is Cytoplasmic; it reads MLWFQGAIPA…VPSSSGDIWT (411 aa). Composition is skewed to polar residues over residues 114 to 136 and 177 to 189; these read SLKG…TPSA and SLSQ…SNQR. The interval 114 to 193 is disordered; that stretch reads SLKGETSVTN…GCSNQRPAED (80 aa). Residues 313–391 form the UBX domain; it reads DRSTIARIQF…ELAPSASVVL (79 aa). An intramembrane segment occupies 412–432; that stretch reads LLGTVLYPFLAIWRLISNFLF. The Cytoplasmic portion of the chain corresponds to 433–506; the sequence is SNPPPAQTSA…TWNGNSTQQM (74 aa). The segment at 437-506 is disordered; the sequence is PAQTSARATS…TWNGNSTQQM (70 aa). The segment covering 444–456 has biased composition (low complexity); that stretch reads ATSTEPSNSASSS. The segment covering 457-489 has biased composition (basic and acidic residues); that stretch reads KSEKREPVRKRVLEKRGEDFKKEGKIYRLRTQD. At T487 the chain carries Phosphothreonine. Positions 496-506 are enriched in polar residues; sequence NTWNGNSTQQM.

As to quaternary structure, directly interacts with VCP. Interacts with UBQLN1. Forms a complex with VCP and UBQLN1.

It is found in the endoplasmic reticulum membrane. Its subcellular location is the nucleus envelope. Involved in endoplasmic reticulum-associated protein degradation (ERAD). Acts as a platform to recruit both UBQLN1 and VCP to the ER during ERAD. This is UBX domain-containing protein 4 (Ubxn4) from Rattus norvegicus (Rat).